Here is a 159-residue protein sequence, read N- to C-terminus: Eukaryotic translation initiation factor 5A-2 (159 aa).

Residues 1–12 are compositionally biased toward basic and acidic residues; that stretch reads MSDEEHQFESKA. The segment at 1-23 is disordered; sequence MSDEEHQFESKADAGASKTYPQQ. Hypusine is present on Lys-52.

This sequence belongs to the eIF-5A family. Lys-52 undergoes hypusination, a unique post-translational modification that consists in the addition of a butylamino group from spermidine to lysine side chain, leading to the formation of the unusual amino acid hypusine. eIF-5As are the only known proteins to undergo this modification, which is essential for their function.

Functionally, translation factor that promotes translation elongation and termination, particularly upon ribosome stalling at specific amino acid sequence contexts. Binds between the exit (E) and peptidyl (P) site of the ribosome and promotes rescue of stalled ribosome: specifically required for efficient translation of polyproline-containing peptides as well as other motifs that stall the ribosome. Acts as a ribosome quality control (RQC) cofactor by joining the RQC complex to facilitate peptidyl transfer during CAT tailing step. The chain is Eukaryotic translation initiation factor 5A-2 (EIF-5A2) from Nicotiana plumbaginifolia (Leadwort-leaved tobacco).